A 232-amino-acid polypeptide reads, in one-letter code: Aquaporin Z (232 aa).

Helical transmembrane passes span 8 to 28 (AFGTFWLVLGGCGSAVLAAGF) and 33 to 53 (IGLLGVALAFGLTVLTMAFAI). Positions 62 to 64 (NPA) match the NPA 1 motif. The next 3 helical transmembrane spans lie at 84-104 (IIAQVIGGLIAGGILYVIATG), 130-150 (MLAALVSEIVMTMMFLIVIMG), and 159-179 (GFAPIAIGLCLTLIHLISIPV). The short motif at 185–187 (NPA) is the NPA 2 element. A helical transmembrane segment spans residues 201–221 (VSQLWLFWVAPIVGGVLGAVI).

This sequence belongs to the MIP/aquaporin (TC 1.A.8) family. In terms of assembly, homotetramer.

It localises to the cell inner membrane. It catalyses the reaction H2O(in) = H2O(out). Functionally, channel that permits osmotically driven movement of water in both directions. It is involved in the osmoregulation and in the maintenance of cell turgor during volume expansion in rapidly growing cells. It mediates rapid entry or exit of water in response to abrupt changes in osmolarity. The protein is Aquaporin Z of Vibrio parahaemolyticus serotype O3:K6 (strain RIMD 2210633).